The following is a 156-amino-acid chain: Small ribosomal subunit protein uS7 (156 aa).

This sequence belongs to the universal ribosomal protein uS7 family. Part of the 30S ribosomal subunit. Contacts proteins S9 and S11.

Its function is as follows. One of the primary rRNA binding proteins, it binds directly to 16S rRNA where it nucleates assembly of the head domain of the 30S subunit. Is located at the subunit interface close to the decoding center, probably blocks exit of the E-site tRNA. The protein is Small ribosomal subunit protein uS7 of Syntrophotalea carbinolica (strain DSM 2380 / NBRC 103641 / GraBd1) (Pelobacter carbinolicus).